The sequence spans 172 residues: Cytidylate kinase (172 aa).

7 to 15 (GPPGSGTST) is an ATP binding site.

This sequence belongs to the cytidylate kinase family. Type 2 subfamily.

The protein localises to the cytoplasm. It carries out the reaction CMP + ATP = CDP + ADP. The catalysed reaction is dCMP + ATP = dCDP + ADP. The chain is Cytidylate kinase from Methanothrix thermoacetophila (strain DSM 6194 / JCM 14653 / NBRC 101360 / PT) (Methanosaeta thermophila).